Reading from the N-terminus, the 883-residue chain is Alanine--tRNA ligase (883 aa).

4 residues coordinate Zn(2+): His-564, His-568, Cys-666, and His-670.

The protein belongs to the class-II aminoacyl-tRNA synthetase family. Requires Zn(2+) as cofactor.

The protein localises to the cytoplasm. It catalyses the reaction tRNA(Ala) + L-alanine + ATP = L-alanyl-tRNA(Ala) + AMP + diphosphate. Catalyzes the attachment of alanine to tRNA(Ala) in a two-step reaction: alanine is first activated by ATP to form Ala-AMP and then transferred to the acceptor end of tRNA(Ala). Also edits incorrectly charged Ser-tRNA(Ala) and Gly-tRNA(Ala) via its editing domain. The polypeptide is Alanine--tRNA ligase (Synechococcus sp. (strain JA-3-3Ab) (Cyanobacteria bacterium Yellowstone A-Prime)).